Here is a 125-residue protein sequence, read N- to C-terminus: MATFKLVISNPKNGIARQVEISGEEAEKLIGKRIGEEISAKELGLNLTEIFGEEIPADTKLKITGGTDKDGFPMRPDVHGPRRVKILVSRGPGFRPKEKGERRKKTVRGNTISPEIVQINMKLVF.

This sequence belongs to the eukaryotic ribosomal protein eS6 family.

The chain is Small ribosomal subunit protein eS6 from Thermococcus onnurineus (strain NA1).